Consider the following 506-residue polypeptide: Probable lipid II flippase MurJ (506 aa).

Transmembrane regions (helical) follow at residues 4-24 (YVVS…MGFV), 86-106 (TVIT…IIFA), 127-147 (VFGY…FVSV), 153-173 (IFFI…LSIF), 181-201 (IYSA…IPFA), 232-252 (IFGF…ASTL), 263-283 (AVVY…TVIF), 308-328 (ILLL…DYIL), 345-365 (TASV…FGFF), 377-397 (TPFY…VFGI), 405-425 (LALA…FIIL), 436-456 (ILFV…IYFF), and 474-494 (LMAA…VLGI).

It belongs to the MurJ/MviN family.

Its subcellular location is the cell inner membrane. Its pathway is cell wall biogenesis; peptidoglycan biosynthesis. Functionally, involved in peptidoglycan biosynthesis. Transports lipid-linked peptidoglycan precursors from the inner to the outer leaflet of the cytoplasmic membrane. This chain is Probable lipid II flippase MurJ, found in Borreliella burgdorferi (strain ATCC 35210 / DSM 4680 / CIP 102532 / B31) (Borrelia burgdorferi).